A 284-amino-acid polypeptide reads, in one-letter code: 3-methyl-2-oxobutanoate hydroxymethyltransferase (284 aa).

Residues D44 and D83 each contribute to the Mg(2+) site. 3-methyl-2-oxobutanoate contacts are provided by residues 44 to 45 (DS), D83, and K112. Mg(2+) is bound at residue E114. Residue E181 is the Proton acceptor of the active site.

Belongs to the PanB family. Homodecamer; pentamer of dimers. Requires Mg(2+) as cofactor.

It localises to the cytoplasm. The enzyme catalyses 3-methyl-2-oxobutanoate + (6R)-5,10-methylene-5,6,7,8-tetrahydrofolate + H2O = 2-dehydropantoate + (6S)-5,6,7,8-tetrahydrofolate. Its pathway is cofactor biosynthesis; coenzyme A biosynthesis. Neither activated nor inhibited by coenzyme A. Its function is as follows. Catalyzes the reversible reaction in which hydroxymethyl group from 5,10-methylenetetrahydrofolate is transferred onto alpha-ketoisovalerate to form ketopantoate. The chain is 3-methyl-2-oxobutanoate hydroxymethyltransferase from Thermococcus kodakarensis (strain ATCC BAA-918 / JCM 12380 / KOD1) (Pyrococcus kodakaraensis (strain KOD1)).